Consider the following 267-residue polypeptide: DNA repair protein RecO (267 aa).

It belongs to the RecO family.

In terms of biological role, involved in DNA repair and RecF pathway recombination. In Mesoplasma florum (strain ATCC 33453 / NBRC 100688 / NCTC 11704 / L1) (Acholeplasma florum), this protein is DNA repair protein RecO.